The primary structure comprises 220 residues: NADH-quinone oxidoreductase subunit I (220 aa).

4Fe-4S ferredoxin-type domains lie at 71–102 (LQRLLDSGSERCIGCGLCEKICTSNCIRIITH) and 112–141 (DSYTINLGRCIYCGLCAEVCPELAIVMGNR). [4Fe-4S] cluster is bound by residues Cys-82, Cys-85, Cys-88, Cys-92, Cys-121, Cys-124, Cys-127, and Cys-131. The interval 189–220 (ATPLDYVQEPSKEESKKETPTSPEANKGDENV) is disordered. Residues 198 to 207 (PSKEESKKET) are compositionally biased toward basic and acidic residues.

Belongs to the complex I 23 kDa subunit family. As to quaternary structure, NDH-1 is composed of 14 different subunits. Subunits NuoA, H, J, K, L, M, N constitute the membrane sector of the complex. Requires [4Fe-4S] cluster as cofactor.

Its subcellular location is the cell inner membrane. The catalysed reaction is a quinone + NADH + 5 H(+)(in) = a quinol + NAD(+) + 4 H(+)(out). Its function is as follows. NDH-1 shuttles electrons from NADH, via FMN and iron-sulfur (Fe-S) centers, to quinones in the respiratory chain. The immediate electron acceptor for the enzyme in this species is believed to be ubiquinone. Couples the redox reaction to proton translocation (for every two electrons transferred, four hydrogen ions are translocated across the cytoplasmic membrane), and thus conserves the redox energy in a proton gradient. In Helicobacter acinonychis (strain Sheeba), this protein is NADH-quinone oxidoreductase subunit I.